We begin with the raw amino-acid sequence, 55 residues long: Protein CADMIUM TOLERANCE 1 (55 aa).

A helical membrane pass occupies residues 24–40; it reads GCLYACIFTALCCFCCY.

It belongs to the CYSTM1 family.

It is found in the cell membrane. The protein resides in the secreted. It localises to the cell wall. Confers resistance to heavy metal ions (e.g. cadmium (CdCl(2)) and copper (CuCl(2))) by chelating them at the plasma membrane of root cells, thus stopping their entry and reducing their accumulation. This Digitaria ciliaris (Southern crabgrass) protein is Protein CADMIUM TOLERANCE 1.